The primary structure comprises 155 residues: Small ribosomal subunit protein uS7 (155 aa).

The protein belongs to the universal ribosomal protein uS7 family. In terms of assembly, part of the 30S ribosomal subunit. Contacts proteins S9 and S11.

One of the primary rRNA binding proteins, it binds directly to 16S rRNA where it nucleates assembly of the head domain of the 30S subunit. Is located at the subunit interface close to the decoding center, probably blocks exit of the E-site tRNA. In Mycoplasma pneumoniae (strain ATCC 29342 / M129 / Subtype 1) (Mycoplasmoides pneumoniae), this protein is Small ribosomal subunit protein uS7.